The chain runs to 957 residues: MARYNPFSFTPGPVVFFTTVIYVGLFAALLVTHLTVPDYPSDPPAGINLTEAWADLEHITRRFHPYNSHANDHVRGYLLSRIQGVIATKALDASQVEVIDDLTSNATFSSGATSVYFEGTNIIVVIRGSEDDEPFNSTDRKPNNGGVLVNAHYDSVSSGYGATDDGVGVVTVLQLLSYFTESHNWPKRTIILLLNNGEEDFLNGAKAFMRNPISQVPHTFVNLEGAGAGGRATLFRSTDTEVTRFYSKSKYPFGTVVSGDGFKKGLIRSETDYRVFHGELGLRGLDIAFMEPRARYHTVEDSTRETSMNSLWHMLSAALASTSGLAAVTGEEFSGSESLDNGRVNAGRGSDGVWFDLFGRVFVVFQLHTLFALCVTLLVVAPIALIGLTFGLSKADKNYLLARKAFVYSSDDDNPVQLYGWRGFFRFPIVFVSATAVVVALAYLLVRFNAFIIYSSPFAVWSMMLSAWFFVAWFFSRGADAMRPSALQRMYALIWLFIGSFVLLTIITVFVNNYQVVAGYPALFYFAVVFAALMLSYLELFFAPTKSAYARHFEHDTSSRRNSESASRPLTGSTTAARSDDRPVADDDATETTSLLRGDRRGFTRYGSRRDSTSEGDEDHAQGSRRLDLGNVYPGEQEWSGKLPSWIWIIQLLLLAPLVIVLVGQVALLLTSALYQTPSDGNSPLFIYLAIAALSVLLLAPTGPFIHRFTYHVPTFLFLVCLATVIYNLVAFPFSRDHRLKVYFVQRVNCETGANTVSLTGLDSYVQRIVGELPSAQDQPLNCTTPDVATRKELKTCEWEGLPAKVVPNAAGAAPFGNETNTDRWLEYSIHKGNRSNKATIRVVGLNTRACRIVFDSPITGLAVTGAVSDPRFKPVGAAGSREVRLWHREFGQPWNVALTWDAEEHAKLSGRVVCLWSDANTGSIPAFDEVQHYLPVWAIPSKISDGLVEGFKQFEI.

Over 1–10 (MARYNPFSFT) the chain is Cytoplasmic. Residues 11 to 31 (PGPVVFFTTVIYVGLFAALLV) traverse the membrane as a helical segment. Topologically, residues 32–369 (THLTVPDYPS…RVFVVFQLHT (338 aa)) are vacuolar. Residues N48, N105, and N136 are each glycosylated (N-linked (GlcNAc...) asparagine). Positions 152 and 164 each coordinate Zn(2+). E198 functions as the Proton acceptor in the catalytic mechanism. The Zn(2+) site is built by E199, E224, and H297. The helical transmembrane segment at 370–390 (LFALCVTLLVVAPIALIGLTF) threads the bilayer. Residues 391 to 423 (GLSKADKNYLLARKAFVYSSDDDNPVQLYGWRG) are Cytoplasmic-facing. Residues 424–444 (FFRFPIVFVSATAVVVALAYL) form a helical membrane-spanning segment. Over 445 to 450 (LVRFNA) the chain is Vacuolar. The helical transmembrane segment at 451–471 (FIIYSSPFAVWSMMLSAWFFV) threads the bilayer. Topologically, residues 472–490 (AWFFSRGADAMRPSALQRM) are cytoplasmic. A helical membrane pass occupies residues 491–511 (YALIWLFIGSFVLLTIITVFV). The Vacuolar portion of the chain corresponds to 512–521 (NNYQVVAGYP). The chain crosses the membrane as a helical span at residues 522–542 (ALFYFAVVFAALMLSYLELFF). Topologically, residues 543 to 642 (APTKSAYARH…YPGEQEWSGK (100 aa)) are cytoplasmic. 2 disordered regions span residues 560-591 (RRNSESASRPLTGSTTAARSDDRPVADDDATE) and 603-628 (FTRYGSRRDSTSEGDEDHAQGSRRLD). The span at 564–577 (ESASRPLTGSTTAA) shows a compositional bias: polar residues. Residues 643–663 (LPSWIWIIQLLLLAPLVIVLV) traverse the membrane as a helical segment. Topologically, residues 664 to 685 (GQVALLLTSALYQTPSDGNSPL) are vacuolar. A helical transmembrane segment spans residues 686–706 (FIYLAIAALSVLLLAPTGPFI). The Cytoplasmic segment spans residues 707–713 (HRFTYHV). A helical transmembrane segment spans residues 714–734 (PTFLFLVCLATVIYNLVAFPF). Topologically, residues 735 to 957 (SRDHRLKVYF…LVEGFKQFEI (223 aa)) are vacuolar. N-linked (GlcNAc...) asparagine glycans are attached at residues N782, N818, and N834.

It belongs to the peptidase M28 family. Zn(2+) is required as a cofactor.

Its subcellular location is the vacuole membrane. Functionally, may be involved in vacuolar sorting and osmoregulation. The protein is Vacuolar membrane protease of Pyrenophora tritici-repentis (strain Pt-1C-BFP) (Wheat tan spot fungus).